We begin with the raw amino-acid sequence, 325 residues long: Glutarate 2-hydroxylase (325 aa).

3 residues coordinate Fe cation: His-160, Asp-162, and His-292.

This sequence belongs to the glutarate hydroxylase family. Homotetramer. Fe(2+) serves as cofactor.

It catalyses the reaction glutarate + 2-oxoglutarate + O2 = (S)-2-hydroxyglutarate + succinate + CO2. Its pathway is amino-acid degradation. Acts as an alpha-ketoglutarate-dependent dioxygenase catalyzing hydroxylation of glutarate (GA) to L-2-hydroxyglutarate (L2HG). Functions in a L-lysine degradation pathway that proceeds via cadaverine, glutarate and L-2-hydroxyglutarate. This chain is Glutarate 2-hydroxylase, found in Escherichia coli (strain K12 / MC4100 / BW2952).